Here is a 305-residue protein sequence, read N- to C-terminus: Peroxidase A2 (305 aa).

Glutamine 1 bears the Pyrrolidone carboxylic acid mark. N-linked (GlcNAc...) asparagine glycosylation is found at asparagine 3 and asparagine 13. 4 cysteine pairs are disulfide-bonded: cysteine 11/cysteine 91, cysteine 44/cysteine 49, cysteine 97/cysteine 299, and cysteine 176/cysteine 208. The Proton acceptor role is filled by histidine 42. Positions 43, 46, 48, 50, and 52 each coordinate Ca(2+). Proline 139 serves as a coordination point for substrate. N-linked (GlcNAc...) asparagine glycosylation occurs at asparagine 147. Histidine 169 is a binding site for heme b. Threonine 170 contributes to the Ca(2+) binding site. Asparagine 185, asparagine 197, and asparagine 211 each carry an N-linked (GlcNAc...) asparagine glycan. Aspartate 221, threonine 224, and aspartate 229 together coordinate Ca(2+). Asparagine 267 is a glycosylation site (N-linked (GlcNAc...) asparagine).

It belongs to the peroxidase family. Classical plant (class III) peroxidase subfamily. Ca(2+) serves as cofactor. Heme b is required as a cofactor.

It catalyses the reaction 2 a phenolic donor + H2O2 = 2 a phenolic radical donor + 2 H2O. In terms of biological role, removal of H(2)O(2), oxidation of toxic reductants, biosynthesis and degradation of lignin, suberization, auxin catabolism, response to environmental stresses such as wounding, pathogen attack and oxidative stress. These functions might be dependent on each isozyme/isoform in each plant tissue. The sequence is that of Peroxidase A2 (HRPA2) from Armoracia rusticana (Horseradish).